The primary structure comprises 242 residues: UPF0273 protein MJ1359 (242 aa).

In terms of domain architecture, KaiC spans 2 to 242; it reads KRVKTGIPGM…VYPDKVLKLR (241 aa). 29–36 lines the ATP pocket; it reads GGPGTGKS.

This sequence belongs to the UPF0273 family.

The sequence is that of UPF0273 protein MJ1359 from Methanocaldococcus jannaschii (strain ATCC 43067 / DSM 2661 / JAL-1 / JCM 10045 / NBRC 100440) (Methanococcus jannaschii).